The sequence spans 230 residues: Orotidine 5'-phosphate decarboxylase (230 aa).

Residues Asp-9, Lys-31, 58-67, Thr-120, Arg-180, Gln-188, Gly-208, and Arg-209 contribute to the substrate site; that span reads DLKFFDIPNT. The active-site Proton donor is Lys-60.

Belongs to the OMP decarboxylase family. Type 1 subfamily. In terms of assembly, homodimer.

It catalyses the reaction orotidine 5'-phosphate + H(+) = UMP + CO2. The protein operates within pyrimidine metabolism; UMP biosynthesis via de novo pathway; UMP from orotate: step 2/2. Functionally, catalyzes the decarboxylation of orotidine 5'-monophosphate (OMP) to uridine 5'-monophosphate (UMP). The sequence is that of Orotidine 5'-phosphate decarboxylase from Maridesulfovibrio salexigens (strain ATCC 14822 / DSM 2638 / NCIMB 8403 / VKM B-1763) (Desulfovibrio salexigens).